Consider the following 324-residue polypeptide: UDP-N-acetylenolpyruvoylglucosamine reductase (324 aa).

Positions phenylalanine 36–alanine 217 constitute an FAD-binding PCMH-type domain. Residue arginine 183 is part of the active site. Serine 232 acts as the Proton donor in catalysis. Glutamate 302 is an active-site residue.

This sequence belongs to the MurB family. FAD is required as a cofactor.

Its subcellular location is the cytoplasm. It catalyses the reaction UDP-N-acetyl-alpha-D-muramate + NADP(+) = UDP-N-acetyl-3-O-(1-carboxyvinyl)-alpha-D-glucosamine + NADPH + H(+). It functions in the pathway cell wall biogenesis; peptidoglycan biosynthesis. Cell wall formation. The sequence is that of UDP-N-acetylenolpyruvoylglucosamine reductase from Rhizobium rhizogenes (strain K84 / ATCC BAA-868) (Agrobacterium radiobacter).